Consider the following 42-residue polypeptide: Photosystem I reaction center subunit IX (42 aa).

Residues 8–28 (YLSTAPVIGVLWMTFTAGFII) form a helical membrane-spanning segment.

The protein belongs to the PsaJ family.

The protein resides in the plastid. It localises to the chloroplast thylakoid membrane. In terms of biological role, may help in the organization of the PsaE and PsaF subunits. The polypeptide is Photosystem I reaction center subunit IX (Pyropia yezoensis (Susabi-nori)).